We begin with the raw amino-acid sequence, 84 residues long: Small ribosomal subunit protein uS17 (84 aa).

It belongs to the universal ribosomal protein uS17 family. Part of the 30S ribosomal subunit.

Functionally, one of the primary rRNA binding proteins, it binds specifically to the 5'-end of 16S ribosomal RNA. The polypeptide is Small ribosomal subunit protein uS17 (Borrelia duttonii (strain Ly)).